A 468-amino-acid polypeptide reads, in one-letter code: Bifunctional protein HldE (468 aa).

The segment at 1 to 315 is ribokinase; the sequence is MAKKVEILVV…ELLRSRANAE (315 aa). An ATP-binding site is contributed by 192–195; it reads NRKE. Asp-260 is an active-site residue. The tract at residues 340–468 is cytidylyltransferase; that stretch reads FTNGCFDILH…IVKRIKDADK (129 aa).

In the N-terminal section; belongs to the carbohydrate kinase PfkB family. The protein in the C-terminal section; belongs to the cytidylyltransferase family. In terms of assembly, homodimer.

It catalyses the reaction D-glycero-beta-D-manno-heptose 7-phosphate + ATP = D-glycero-beta-D-manno-heptose 1,7-bisphosphate + ADP + H(+). The enzyme catalyses D-glycero-beta-D-manno-heptose 1-phosphate + ATP + H(+) = ADP-D-glycero-beta-D-manno-heptose + diphosphate. Its pathway is nucleotide-sugar biosynthesis; ADP-L-glycero-beta-D-manno-heptose biosynthesis; ADP-L-glycero-beta-D-manno-heptose from D-glycero-beta-D-manno-heptose 7-phosphate: step 1/4. It participates in nucleotide-sugar biosynthesis; ADP-L-glycero-beta-D-manno-heptose biosynthesis; ADP-L-glycero-beta-D-manno-heptose from D-glycero-beta-D-manno-heptose 7-phosphate: step 3/4. Its function is as follows. Catalyzes the phosphorylation of D-glycero-D-manno-heptose 7-phosphate at the C-1 position to selectively form D-glycero-beta-D-manno-heptose-1,7-bisphosphate. Catalyzes the ADP transfer from ATP to D-glycero-beta-D-manno-heptose 1-phosphate, yielding ADP-D-glycero-beta-D-manno-heptose. The sequence is that of Bifunctional protein HldE from Campylobacter curvus (strain 525.92).